The chain runs to 210 residues: N-(5'-phosphoribosyl)anthranilate isomerase (210 aa).

This sequence belongs to the TrpF family.

The catalysed reaction is N-(5-phospho-beta-D-ribosyl)anthranilate = 1-(2-carboxyphenylamino)-1-deoxy-D-ribulose 5-phosphate. Its pathway is amino-acid biosynthesis; L-tryptophan biosynthesis; L-tryptophan from chorismate: step 3/5. The protein is N-(5'-phosphoribosyl)anthranilate isomerase of Staphylococcus aureus (strain Mu3 / ATCC 700698).